Consider the following 1250-residue polypeptide: DNA excision repair protein ERCC-6-like (1250 aa).

A Phosphoserine modification is found at Ser14. One copy of the TPR 1 repeat lies at 21-54 (YLRYVKEAKEATKNGDLEEAFKLFNLAKDIFPNE). The Helicase ATP-binding domain maps to 109–277 (SLYRDGRKGG…WSLFDFACQG (169 aa)). 122–129 (DDMGLGKT) is an ATP binding site. Residues 228 to 231 (DEAH) carry the DEAH box motif. A Helicase C-terminal domain is found at 464 to 620 (FLMDLLKRLR…EKKNPFRYFS (157 aa)). Residues 735–768 (VFPSSTKKKCPKLNKPQPQPSPLLSTHHTQEEDI) form a disordered region. Phosphoserine occurs at positions 755, 774, 807, and 810. Thr813 is modified (phosphothreonine). Phosphoserine is present on Ser820. The disordered stretch occupies residues 926–946 (SALQDAQASEAKLEEEPSASS). A phosphoserine mark is found at Ser969, Ser971, Ser995, Ser1004, and Ser1028. A disordered region spans residues 1061-1092 (ASTPKNDISPPGRFFSSQIPSSVNKSMNSRRS). Thr1063 is modified (phosphothreonine; by PLK1). Phosphoserine is present on Ser1069. Over residues 1075–1087 (FSSQIPSSVNKSM) the composition is skewed to polar residues. Phosphoserine occurs at positions 1098 and 1118. The tract at residues 1110-1199 (MEERLDDSSE…QDKAAEATND (90 aa)) is disordered. Basic and acidic residues predominate over residues 1115-1124 (DDSSEAKGPE). Positions 1125 to 1135 (DYPEEGVEESS) are enriched in acidic residues. Residues 1149–1173 (ETLSSENKSSWLMTSKPSALAQETS) show a composition bias toward polar residues. Ser1181 and Ser1188 each carry phosphoserine. The TPR 2 repeat unit spans residues 1200–1233 (YETLVKRGKELKECGKIQEALNCLVKALDIKSAD).

The protein belongs to the SNF2/RAD54 helicase family. As to quaternary structure, interacts with PLK1, which phosphorylates it. Both proteins are mutually dependent on each other for correct subcellular localization. Interacts (via N-terminal TPR repeat) with BEND3 (via BEN domains 1 and 3); the interaction is direct. Phosphorylation by PLK1 prevents the association with chromosome arms and restricts its localization to the kinetochore-centromere region.

The protein resides in the chromosome. It is found in the centromere. It localises to the kinetochore. It carries out the reaction ATP + H2O = ADP + phosphate + H(+). Its function is as follows. DNA helicase that acts as a tension sensor that associates with catenated DNA which is stretched under tension until it is resolved during anaphase. Functions as ATP-dependent DNA translocase. Can promote Holliday junction branch migration (in vitro). The polypeptide is DNA excision repair protein ERCC-6-like (ERCC6L) (Homo sapiens (Human)).